Reading from the N-terminus, the 452-residue chain is Protein FAM81B (452 aa).

Composition is skewed to polar residues over residues 1-11 and 38-55; these read MQLQFLGTLAS and IMSS…TATA. Residues 1 to 85 are disordered; it reads MQLQFLGTLA…KVRLSPAKMS (85 aa). 2 coiled-coil regions span residues 164 to 192 and 329 to 452; these read IQTI…DQAA and LGHI…LQEV.

The protein belongs to the FAM81 family.

This is Protein FAM81B (FAM81B) from Homo sapiens (Human).